Here is a 368-residue protein sequence, read N- to C-terminus: Glutamyl-tRNA reductase (368 aa).

Substrate contacts are provided by residues 43–46 (TCHR), serine 89, 94–96 (EHQ), and glutamine 100. Cysteine 44 functions as the Nucleophile in the catalytic mechanism. 164 to 169 (GTGMMG) contributes to the NADP(+) binding site.

It belongs to the glutamyl-tRNA reductase family. In terms of assembly, homodimer.

The catalysed reaction is (S)-4-amino-5-oxopentanoate + tRNA(Glu) + NADP(+) = L-glutamyl-tRNA(Glu) + NADPH + H(+). The protein operates within porphyrin-containing compound metabolism; protoporphyrin-IX biosynthesis; 5-aminolevulinate from L-glutamyl-tRNA(Glu): step 1/2. Catalyzes the NADPH-dependent reduction of glutamyl-tRNA(Glu) to glutamate 1-semialdehyde (GSA). This Thermosipho melanesiensis (strain DSM 12029 / CIP 104789 / BI429) protein is Glutamyl-tRNA reductase.